The primary structure comprises 1036 residues: Beta-galactosidase (1036 aa).

N97 and D197 together coordinate substrate. Position 197 (D197) interacts with Na(+). Mg(2+)-binding residues include E411, H413, and E456. Substrate contacts are provided by residues E456 and 532–535 (EYAH). E456 serves as the catalytic Proton donor. The active-site Nucleophile is the E532. N592 serves as a coordination point for Mg(2+). Residues F596 and D599 each coordinate Na(+). Residues D599 and W1006 each contribute to the substrate site.

This sequence belongs to the glycosyl hydrolase 2 family. Homotetramer. Requires Mg(2+) as cofactor. Na(+) serves as cofactor.

The enzyme catalyses Hydrolysis of terminal non-reducing beta-D-galactose residues in beta-D-galactosides.. The polypeptide is Beta-galactosidase (Leuconostoc mesenteroides subsp. mesenteroides (strain ATCC 8293 / DSM 20343 / BCRC 11652 / CCM 1803 / JCM 6124 / NCDO 523 / NBRC 100496 / NCIMB 8023 / NCTC 12954 / NRRL B-1118 / 37Y)).